Here is a 329-residue protein sequence, read N- to C-terminus: Ketol-acid reductoisomerase (NADP(+)) (329 aa).

The KARI N-terminal Rossmann domain occupies threonine 2–threonine 182. Residues tyrosine 25–glutamine 28, serine 51, serine 53, and aspartate 83–glutamine 86 each bind NADP(+). Residue histidine 108 is part of the active site. Glycine 134 serves as a coordination point for NADP(+). The KARI C-terminal knotted domain occupies asparagine 183 to leucine 328. Mg(2+)-binding residues include aspartate 191, glutamate 195, glutamate 227, and glutamate 231. Serine 252 serves as a coordination point for substrate.

It belongs to the ketol-acid reductoisomerase family. Requires Mg(2+) as cofactor.

The enzyme catalyses (2R)-2,3-dihydroxy-3-methylbutanoate + NADP(+) = (2S)-2-acetolactate + NADPH + H(+). The catalysed reaction is (2R,3R)-2,3-dihydroxy-3-methylpentanoate + NADP(+) = (S)-2-ethyl-2-hydroxy-3-oxobutanoate + NADPH + H(+). Its pathway is amino-acid biosynthesis; L-isoleucine biosynthesis; L-isoleucine from 2-oxobutanoate: step 2/4. It functions in the pathway amino-acid biosynthesis; L-valine biosynthesis; L-valine from pyruvate: step 2/4. In terms of biological role, involved in the biosynthesis of branched-chain amino acids (BCAA). Catalyzes an alkyl-migration followed by a ketol-acid reduction of (S)-2-acetolactate (S2AL) to yield (R)-2,3-dihydroxy-isovalerate. In the isomerase reaction, S2AL is rearranged via a Mg-dependent methyl migration to produce 3-hydroxy-3-methyl-2-ketobutyrate (HMKB). In the reductase reaction, this 2-ketoacid undergoes a metal-dependent reduction by NADPH to yield (R)-2,3-dihydroxy-isovalerate. The protein is Ketol-acid reductoisomerase (NADP(+)) of Prochlorococcus marinus (strain MIT 9215).